Consider the following 212-residue polypeptide: Fe/S biogenesis protein NfuA (212 aa).

Cysteine 169 and cysteine 172 together coordinate [4Fe-4S] cluster.

The protein belongs to the NfuA family. As to quaternary structure, homodimer. It depends on [4Fe-4S] cluster as a cofactor.

In terms of biological role, involved in iron-sulfur cluster biogenesis. Binds a 4Fe-4S cluster, can transfer this cluster to apoproteins, and thereby intervenes in the maturation of Fe/S proteins. Could also act as a scaffold/chaperone for damaged Fe/S proteins. The sequence is that of Fe/S biogenesis protein NfuA from Acinetobacter baylyi (strain ATCC 33305 / BD413 / ADP1).